Consider the following 329-residue polypeptide: Glycerol-3-phosphate dehydrogenase [NAD(P)+] (329 aa).

NADPH contacts are provided by S13, W14, H34, and K105. Sn-glycerol 3-phosphate contacts are provided by K105, G134, and S136. Position 138 (A138) interacts with NADPH. Sn-glycerol 3-phosphate is bound by residues K189, D242, S252, R253, and N254. Catalysis depends on K189, which acts as the Proton acceptor. R253 is an NADPH binding site. Residues V277 and E279 each coordinate NADPH.

Belongs to the NAD-dependent glycerol-3-phosphate dehydrogenase family.

It localises to the cytoplasm. The enzyme catalyses sn-glycerol 3-phosphate + NAD(+) = dihydroxyacetone phosphate + NADH + H(+). It carries out the reaction sn-glycerol 3-phosphate + NADP(+) = dihydroxyacetone phosphate + NADPH + H(+). Its pathway is membrane lipid metabolism; glycerophospholipid metabolism. Its function is as follows. Catalyzes the reduction of the glycolytic intermediate dihydroxyacetone phosphate (DHAP) to sn-glycerol 3-phosphate (G3P), the key precursor for phospholipid synthesis. The chain is Glycerol-3-phosphate dehydrogenase [NAD(P)+] from Legionella pneumophila (strain Lens).